The chain runs to 868 residues: Facilitated trehalose transporter Tret1 (868 aa).

Disordered regions lie at residues 1-213 and 257-314; these read MSGR…QKAT and KESS…LIHR. Topologically, residues 1 to 403 are cytoplasmic; it reads MSGRDNRGAG…VYRPTTNPIY (403 aa). Residues 25–43 show a composition bias toward basic and acidic residues; that stretch reads KLKEKLTRAGDDQGYHRVE. Composition is skewed to low complexity over residues 44–57, 79–91, and 117–126; these read SNLS…SLDT, PQQQ…QQLR, and PFQQQQQRTP. 2 stretches are compositionally biased toward basic and acidic residues: residues 146–155 and 257–290; these read EIREHRDRQQ and KESS…KLDK. A phosphoserine mark is found at S259, S260, S261, S331, and S333. A disordered region spans residues 335-367; that stretch reads EDFHTSRQHFQQQRSISTDSRKSRRPYEMDEMG. The span at 342-352 shows a compositional bias: polar residues; sequence QHFQQQRSIST. Over residues 353–367 the composition is skewed to basic and acidic residues; that stretch reads DSRKSRRPYEMDEMG. The chain crosses the membrane as a helical span at residues 404–424; the sequence is IWTQVLAALSVSLGSLVVGFV. Residues 425 to 451 lie on the Extracellular side of the membrane; it reads SAYTSPALVSMTNRNMTSFEVTPQAAS. Residue N439 is glycosylated (N-linked (GlcNAc...) asparagine). A helical transmembrane segment spans residues 452–472; that stretch reads WVGGIMPLAGLAGGIAGGPFI. The Cytoplasmic segment spans residues 473-484; that stretch reads EYLGRRNTILAT. Residues 485–505 form a helical membrane-spanning segment; sequence AIPFIVSSLLIACAVNVAMVL. Residues 506 to 508 lie on the Extracellular side of the membrane; it reads AGR. A helical membrane pass occupies residues 509–529; sequence FLAGFCVGIASLSLPVYLGET. Residues 530–535 are Cytoplasmic-facing; it reads VQPEVR. A helical transmembrane segment spans residues 536–556; it reads GTLGLLPTAFGNIGILLCFVA. The Extracellular segment spans residues 557 to 563; it reads GTYMDWS. Residues 564–584 form a helical membrane-spanning segment; the sequence is MLAFLGAALPVPFLILMFLIP. Topologically, residues 585-653 are cytoplasmic; that stretch reads ETPRWFVSRG…NLKPLSISLG (69 aa). A helical membrane pass occupies residues 654-674; that stretch reads LMFFQQLSGINAVIFYTVSIF. Topologically, residues 675–684 are extracellular; sequence KDAGSTIDGN. Residues 685–705 traverse the membrane as a helical segment; sequence LCTIIVGIVNFMATFIATLLI. Topologically, residues 706–711 are cytoplasmic; it reads DRAGRK. Residues 712-732 traverse the membrane as a helical segment; sequence ILLYVSNIAMIITLFVLGGFF. Residues 733–751 are Extracellular-facing; sequence YCKSHGQDVSQLGWLPLSC. The helical transmembrane segment at 752 to 772 threads the bilayer; that stretch reads FVIYILGFSLGFGPIPWLMMG. Residues 773–778 are Cytoplasmic-facing; sequence EILPSK. Residues 779–799 form a helical membrane-spanning segment; it reads IRGSAASVATAFNWSCTFVVT. At 800 to 812 the chain is on the extracellular side; sequence KTFQDMIDFMGAH. The helical transmembrane segment at 813–833 threads the bilayer; that stretch reads GAFWLFGSICFIGLFFVILYV. Topologically, residues 834 to 868 are cytoplasmic; the sequence is PETQGKTLEDIERKMMGRVRRMSSVANMKPLAFNM. Phosphoserine is present on residues S856 and S857.

Belongs to the major facilitator superfamily. Sugar transporter (TC 2.A.1.1) family. Trehalose transporter subfamily.

Its subcellular location is the cell membrane. Functionally, low-capacity facilitative transporter for trehalose. Does not transport maltose, sucrose or lactose. Mediates the bidirectional transfer of trehalose. Responsible for the transport of trehalose synthesized in the fat body and the incorporation of trehalose into other tissues that require a carbon source, thereby regulating trehalose levels in the hemolymph. This chain is Facilitated trehalose transporter Tret1, found in Drosophila pseudoobscura pseudoobscura (Fruit fly).